The sequence spans 273 residues: Large ribosomal subunit protein uL2 (273 aa).

Positions 223 to 273 are disordered; that stretch reads VVMNPVDHPMGGGEGRSSGGRHPCTPWGVPTKGHKTRSNKSTDKYIVKRRG. Residues 262–273 are compositionally biased toward basic and acidic residues; it reads KSTDKYIVKRRG.

This sequence belongs to the universal ribosomal protein uL2 family. As to quaternary structure, part of the 50S ribosomal subunit. Forms a bridge to the 30S subunit in the 70S ribosome.

In terms of biological role, one of the primary rRNA binding proteins. Required for association of the 30S and 50S subunits to form the 70S ribosome, for tRNA binding and peptide bond formation. It has been suggested to have peptidyltransferase activity; this is somewhat controversial. Makes several contacts with the 16S rRNA in the 70S ribosome. This Syntrophus aciditrophicus (strain SB) protein is Large ribosomal subunit protein uL2.